We begin with the raw amino-acid sequence, 325 residues long: uncharacterized protein (325 aa).

The tract at residues 1-75 (MSQPPEHPGN…PPPGYPTHLQ (75 aa)) is disordered. The segment covering 24-70 (YPPPGYGAPPPPPGYGPPPGTYLPPGYNAPPPPPGYGPPPGPPPPGY) has biased composition (pro residues). 4 helical membrane-spanning segments follow: residues 96–116 (AVTL…VIGA), 153–173 (IVMF…HAGI), 205–225 (LLIV…GLIF), and 273–293 (LVGE…AALI).

The protein to M.tuberculosis Rv2560.

The protein localises to the cell membrane. This is an uncharacterized protein from Mycobacterium bovis (strain ATCC BAA-935 / AF2122/97).